We begin with the raw amino-acid sequence, 494 residues long: MSKPLFEAYPLTGLDHTIPPCYVRFLLTFPVPDVALAVNQLQKGAENLIEKLPFLAGYLASCETPGVRPGQLEIRPPAGERRPVCLVAHHSNSYLADSSATSTTEQLGTANENYLPVPFFPELDKPVPIFRVKVNAMTDGIILGFAFHHSVIDATGMGTIVRDFARCCRGPDGGPLEISLESQQDSREKLRHSGGPPDPRFDHNGEYPLVASLPADLEAMKQVLIQTARLMSTQYFRIPASLVNTLKESCNRMLRESPALRDEGENPWISSNDLVVSLLWLCLNRVRYPEDNTNVIPPSDSSVCMAVNIRGRLQSPIDPGYVGNAIVLLRESVGMNAFLHKPGDDDPLGAQCYETAKRLGREAWEAALVRIALAIRRKLNTINASYVRSVISYLEDVPDLSTVAFGQTDYHISSWRDIGVYEADFGGHMGHPSEMRVPDGMVDGMFYILPRRQGTHPCWEIHVTIHQDTMKRLIADPVWARYTVRKPSSLCRDE.

A disordered region spans residues 181 to 203 (ESQQDSREKLRHSGGPPDPRFDH).

This sequence belongs to the fumigaclavine B O-acetyltransferase family. As to quaternary structure, monomer.

It participates in secondary metabolite biosynthesis. Its function is as follows. O-acetyltransferase; part of the gene cluster that mediates the biosynthesis of the indole diterpenes penitrems. The geranylgeranyl diphosphate (GGPP) synthase ptmG catalyzes the first step in penitrem biosynthesis via conversion of farnesyl pyrophosphate and isopentyl pyrophosphate into geranylgeranyl pyrophosphate (GGPP). Condensation of indole-3-glycerol phosphate with GGPP by the prenyl transferase ptmC then forms 3-geranylgeranylindole (3-GGI). Epoxidation by the FAD-dependent monooxygenase ptmM leads to a epoxidized-GGI that is substrate of the terpene cyclase ptmB for cyclization to yield paspaline. Paspaline is subsequently converted to 13-desoxypaxilline by the cytochrome P450 monooxygenase ptmP, the latter being then converted to paxilline by the cytochrome P450 monooxygenase ptmQ. Paxilline is converted to beta-paxitriol via C-10 ketoreduction by the short-chain dehydrogenase ptmH which can be monoprenylated at the C-20 by the indole diterpene prenyltransferase ptmD. A two-step elimination (acetylation and elimination) process performed by the O-acetyltransferase ptmV and ptmI leads to the production of the prenylated form of penijanthine. The FAD-linked oxidoreductase ptmO then converts the prenylated form of penijanthine into PC-M5 which is in turn transformed into PC-M4 by the aromatic dimethylallyltransferase ptmE. Five sequential oxidative transformations performed by the cytochrome P450 monooxygenases ptmK, ptmU, ptmL, ptmN and ptmJ yield the various penitrem compounds. PtmK, ptmU and ptmM are involved in the formation of the key bicyclic ring of penitrem C via the formation of the intermediates secopenitrem D and penitrem D. PtmL catalyzes the epoxidation of penitrem D and C to yield penitrem B and F, respectively. PtmJ catalyzes the last benzylic hydroxylation to convert penitrem B to prenitrem E and penitrem F to penitrem A. The chain is O-acetyltransferase ptmV from Penicillium ochrochloron.